We begin with the raw amino-acid sequence, 406 residues long: Argininosuccinate synthase (406 aa).

Position 8–16 (8–16 (AYSGGLDTS)) interacts with ATP. Tyr-86 serves as a coordination point for L-citrulline. Gly-116 serves as a coordination point for ATP. 3 residues coordinate L-aspartate: Thr-118, Asn-122, and Asp-123. Asn-122 provides a ligand contact to L-citrulline. The L-citrulline site is built by Arg-126, Ser-174, Ser-183, Glu-259, and Tyr-271.

This sequence belongs to the argininosuccinate synthase family. Type 1 subfamily. Homotetramer.

Its subcellular location is the cytoplasm. It catalyses the reaction L-citrulline + L-aspartate + ATP = 2-(N(omega)-L-arginino)succinate + AMP + diphosphate + H(+). The protein operates within amino-acid biosynthesis; L-arginine biosynthesis; L-arginine from L-ornithine and carbamoyl phosphate: step 2/3. The sequence is that of Argininosuccinate synthase from Dehalococcoides mccartyi (strain ATCC BAA-2266 / KCTC 15142 / 195) (Dehalococcoides ethenogenes (strain 195)).